The following is a 75-amino-acid chain: Small ribosomal subunit protein eS28 (75 aa).

The protein belongs to the eukaryotic ribosomal protein eS28 family.

The polypeptide is Small ribosomal subunit protein eS28 (Methanococcus aeolicus (strain ATCC BAA-1280 / DSM 17508 / OCM 812 / Nankai-3)).